The following is a 322-amino-acid chain: Eukaryotic translation initiation factor 3 subunit I (322 aa).

WD repeat units follow at residues 4–43 (GHER…RLGT), 46–85 (GHQG…VIAS), 141–180 (MVES…KVVD), 184–223 (DHTA…CLKT), and 281–322 (GHFG…NIFE).

The protein belongs to the eIF-3 subunit I family. As to quaternary structure, component of the eukaryotic translation initiation factor 3 (eIF-3) complex. The eIF-3 complex interacts with pix.

It localises to the cytoplasm. In terms of biological role, component of the eukaryotic translation initiation factor 3 (eIF-3) complex, which is involved in protein synthesis of a specialized repertoire of mRNAs and, together with other initiation factors, stimulates binding of mRNA and methionyl-tRNAi to the 40S ribosome. The eIF-3 complex specifically targets and initiates translation of a subset of mRNAs involved in cell proliferation. This is Eukaryotic translation initiation factor 3 subunit I from Drosophila virilis (Fruit fly).